The primary structure comprises 776 residues: 1,4-alpha-glucan branching enzyme GlgB (776 aa).

Asp-431 acts as the Nucleophile in catalysis. Glu-484 functions as the Proton donor in the catalytic mechanism.

This sequence belongs to the glycosyl hydrolase 13 family. GlgB subfamily. As to quaternary structure, monomer.

The catalysed reaction is Transfers a segment of a (1-&gt;4)-alpha-D-glucan chain to a primary hydroxy group in a similar glucan chain.. It participates in glycan biosynthesis; glycogen biosynthesis. In terms of biological role, catalyzes the formation of the alpha-1,6-glucosidic linkages in glycogen by scission of a 1,4-alpha-linked oligosaccharide from growing alpha-1,4-glucan chains and the subsequent attachment of the oligosaccharide to the alpha-1,6 position. This Trichodesmium erythraeum (strain IMS101) protein is 1,4-alpha-glucan branching enzyme GlgB.